The chain runs to 210 residues: Imidazole glycerol phosphate synthase subunit HisH 1 (210 aa).

Positions 3-210 (KIAIVDYGMC…LDNFLSFSNV (208 aa)) constitute a Glutamine amidotransferase type-1 domain. The active-site Nucleophile is the C82. Catalysis depends on residues H189 and E191.

In terms of assembly, heterodimer of HisH and HisF.

The protein resides in the cytoplasm. The catalysed reaction is 5-[(5-phospho-1-deoxy-D-ribulos-1-ylimino)methylamino]-1-(5-phospho-beta-D-ribosyl)imidazole-4-carboxamide + L-glutamine = D-erythro-1-(imidazol-4-yl)glycerol 3-phosphate + 5-amino-1-(5-phospho-beta-D-ribosyl)imidazole-4-carboxamide + L-glutamate + H(+). It carries out the reaction L-glutamine + H2O = L-glutamate + NH4(+). It functions in the pathway amino-acid biosynthesis; L-histidine biosynthesis; L-histidine from 5-phospho-alpha-D-ribose 1-diphosphate: step 5/9. Its function is as follows. IGPS catalyzes the conversion of PRFAR and glutamine to IGP, AICAR and glutamate. The HisH subunit provides the glutamine amidotransferase activity that produces the ammonia necessary to HisF for the synthesis of IGP and AICAR. In Parasynechococcus marenigrum (strain WH8102), this protein is Imidazole glycerol phosphate synthase subunit HisH 1 (hisH1).